The following is a 977-amino-acid chain: Synaptonemal complex protein 2-like (977 aa).

Disordered regions lie at residues 447–474 (LGSQTSEHSSTTKTSSANRSVQKSLSNA), 574–593 (QSTERATPASRYRASMNSPL), 642–728 (RNKS…QDIM), and 804–824 (TEKNVNRSAADSEDSEDVFYS). Low complexity predominate over residues 449–462 (SQTSEHSSTTKTSS). Polar residues predominate over residues 463-474 (ANRSVQKSLSNA). Positions 674–693 (SRKEMHRPEDINPKSPHSAE) are enriched in basic and acidic residues.

The protein belongs to the SYCP2 family. Post-translationally, ubiquitinated and gradually degraded by the proteasome during oocyte maturation. Phosphorylated in maturing oocytes, before its degradation. In terms of tissue distribution, expressed in immature oocytes (at protein level). Expressed in the ovary.

The protein localises to the nucleus. Its subcellular location is the chromosome. It is found in the centromere. It localises to the nucleolus. Oocyte-specific protein that localizes to centromeres at the dictyate stage and regulates the survival of primordial oocytes. The protein is Synaptonemal complex protein 2-like (sycp2l) of Xenopus laevis (African clawed frog).